A 302-amino-acid chain; its full sequence is Probable 2-(5''-triphosphoribosyl)-3'-dephosphocoenzyme-A synthase 1 (302 aa).

This sequence belongs to the CitG/MdcB family.

It catalyses the reaction 3'-dephospho-CoA + ATP = 2'-(5''-triphospho-alpha-D-ribosyl)-3'-dephospho-CoA + adenine. This Salmonella typhimurium (strain LT2 / SGSC1412 / ATCC 700720) protein is Probable 2-(5''-triphosphoribosyl)-3'-dephosphocoenzyme-A synthase 1.